Consider the following 663-residue polypeptide: UvrABC system protein B (663 aa).

Residues 1–10 (MIDKRDDKPF) are compositionally biased toward basic and acidic residues. A disordered region spans residues 1–23 (MIDKRDDKPFKLKSKYKPSGDQP). The region spanning 31-271 (DNIEGGEKAQ…EQSIAKIQAE (241 aa)) is the Helicase ATP-binding domain. 44–51 (GATGTGKT) serves as a coordination point for ATP. Residues 97 to 120 (YYDYYQPEAYVPSSDTYIEKDSSV) carry the Beta-hairpin motif. Positions 435-601 (QMDDLLGEIN…TIKKDIRGLI (167 aa)) constitute a Helicase C-terminal domain. Positions 627-662 (KEAINALQKQMQEAAELLDFELAAQMRDLILELKLM) constitute a UVR domain.

Belongs to the UvrB family. As to quaternary structure, forms a heterotetramer with UvrA during the search for lesions. Interacts with UvrC in an incision complex.

It is found in the cytoplasm. The UvrABC repair system catalyzes the recognition and processing of DNA lesions. A damage recognition complex composed of 2 UvrA and 2 UvrB subunits scans DNA for abnormalities. Upon binding of the UvrA(2)B(2) complex to a putative damaged site, the DNA wraps around one UvrB monomer. DNA wrap is dependent on ATP binding by UvrB and probably causes local melting of the DNA helix, facilitating insertion of UvrB beta-hairpin between the DNA strands. Then UvrB probes one DNA strand for the presence of a lesion. If a lesion is found the UvrA subunits dissociate and the UvrB-DNA preincision complex is formed. This complex is subsequently bound by UvrC and the second UvrB is released. If no lesion is found, the DNA wraps around the other UvrB subunit that will check the other stand for damage. This chain is UvrABC system protein B, found in Streptococcus pyogenes serotype M4 (strain MGAS10750).